Reading from the N-terminus, the 403-residue chain is Putative F-box/LRR-repeat protein At5g38386 (403 aa).

Residues 1–47 form the F-box domain; it reads MDHLSNLPDELLCHIMSFLTTKEAALISVLSKRWRNLIAFVPNLDIF. LRR repeat units follow at residues 64–91, 93–119, 131–156, 175–203, 243–274, and 275–300; these read IRQL…SLCC, GGSY…DLSM, VFEN…VMNH, LKTL…SYSD, YLYF…SIKS, and VESR…VLEA.

This is Putative F-box/LRR-repeat protein At5g38386 from Arabidopsis thaliana (Mouse-ear cress).